A 222-amino-acid chain; its full sequence is CASP-like protein 1E1 (222 aa).

Residues 1–59 (MEASRVKPGFNGVGMAAGSVNGSSRRPGPGLGYGYGYYMGSGAAAGGSGRAAQAPVDGC) are Cytoplasmic-facing. A helical transmembrane segment spans residues 60 to 80 (SVALRVFVVASTLVSAVVMGV). The Extracellular segment spans residues 81-110 (DRQTRTIQITITDALPPLEVPLTANWSYSS). Residue Asn-105 is glycosylated (N-linked (GlcNAc...) asparagine). A helical transmembrane segment spans residues 111-131 (AFVYFVVANAMVCLFSAAALA). Over 132–146 (ACRSRAAMVPVMVGD) the chain is Cytoplasmic. Residues 147-167 (LLALALLYSAVGAAAEFGILG) form a helical membrane-spanning segment. The Extracellular portion of the chain corresponds to 168 to 189 (ERGNSHVRWAKVCNVYGRFCDR). A helical membrane pass occupies residues 190 to 210 (AMAAVIVSLIGAFANLVLLML). At 211–222 (NILTIHKSSSYY) the chain is on the cytoplasmic side.

This sequence belongs to the Casparian strip membrane proteins (CASP) family. In terms of assembly, homodimer and heterodimers.

It is found in the cell membrane. This is CASP-like protein 1E1 from Sorghum bicolor (Sorghum).